Reading from the N-terminus, the 610-residue chain is All-trans-retinol 13,14-reductase (610 aa).

The N-terminal stretch at 1 to 18 is a signal peptide; sequence MWLPLVLFLAVLLLAVVC.

The protein belongs to the carotenoid/retinoid oxidoreductase family. CrtISO subfamily. NAD(+) is required as a cofactor. The cofactor is NADP(+). Requires FAD as cofactor.

It localises to the endoplasmic reticulum membrane. It catalyses the reaction all-trans-13,14-dihydroretinol + A = all-trans-retinol + AH2. Its function is as follows. Catalyzes the saturation of all-trans-retinol to all-trans-13,14-dihydroretinol. Does not exhibit any activity toward all-trans-retinoic acid, nor 9-cis, 11-cis or 13-cis-retinol isomers. May play a role in the metabolism of vitamin A. Independently of retinol conversion, may regulate liver metabolism upstream of MLXIPL/ChREBP. May play a role in adipocyte differentiation. This Macaca fascicularis (Crab-eating macaque) protein is All-trans-retinol 13,14-reductase (RETSAT).